The following is a 314-amino-acid chain: E3 ubiquitin-protein ligase SINA-like 11 (314 aa).

Polar residues predominate over residues 1-12; sequence MEDSNSHPQNQT. The interval 1–31 is disordered; it reads MEDSNSHPQNQTSKRKSSHPQKKQRMENETR. Residues 13–23 are compositionally biased toward basic residues; the sequence is SKRKSSHPQKK. Residues 43–81 form an RING-type; degenerate zinc finger; it reads CPVCFEPLTIPTFQCDDGHIVCNFCFAKVSNKCPGPGCD. Residues 95 to 280 form an SBD region; sequence VLESAFVPCQ…PANEVQQVTI (186 aa). Residues 98–156 form an SIAH-type zinc finger; sequence SAFVPCQNTEFGCTKSVSYEKVSSHEKECNYSQCSCPNLECNYTGSYNIIYGHFMRRHL. Zn(2+) is bound by residues cysteine 103, cysteine 110, histidine 122, cysteine 126, cysteine 133, cysteine 138, histidine 150, and histidine 155.

Belongs to the SINA (Seven in absentia) family.

The enzyme catalyses S-ubiquitinyl-[E2 ubiquitin-conjugating enzyme]-L-cysteine + [acceptor protein]-L-lysine = [E2 ubiquitin-conjugating enzyme]-L-cysteine + N(6)-ubiquitinyl-[acceptor protein]-L-lysine.. Its pathway is protein modification; protein ubiquitination. Its function is as follows. E3 ubiquitin-protein ligase that mediates ubiquitination and subsequent proteasomal degradation of target proteins. E3 ubiquitin ligases accept ubiquitin from an E2 ubiquitin-conjugating enzyme in the form of a thioester and then directly transfers the ubiquitin to targeted substrates. It probably triggers the ubiquitin-mediated degradation of different substrates. The sequence is that of E3 ubiquitin-protein ligase SINA-like 11 from Arabidopsis thaliana (Mouse-ear cress).